Reading from the N-terminus, the 449-residue chain is Chromosomal replication initiator protein DnaA (449 aa).

The tract at residues 1-83 (MDDSLWSACL…VELEIGSPPT (83 aa)) is domain I, interacts with DnaA modulators. The interval 77–114 (EIGSPPTPDQREAATGATRAAPAQRSSEPRQRPVDSNL) is disordered. Residues 83–112 (TPDQREAATGATRAAPAQRSSEPRQRPVDS) form a domain II region. Residues 89 to 99 (AATGATRAAPA) show a composition bias toward low complexity. The tract at residues 113 to 329 (NLNPGFTFDS…GALRRITANA (217 aa)) is domain III, AAA+ region. Glycine 157, glycine 159, lysine 160, and threonine 161 together coordinate ATP. The domain IV, binds dsDNA stretch occupies residues 330 to 449 (QFTGRAIDVD…YDNLLRTLST (120 aa)).

The protein belongs to the DnaA family. Oligomerizes as a right-handed, spiral filament on DNA at oriC.

It is found in the cytoplasm. Plays an essential role in the initiation and regulation of chromosomal replication. ATP-DnaA binds to the origin of replication (oriC) to initiate formation of the DNA replication initiation complex once per cell cycle. Binds the DnaA box (a 9 base pair repeat at the origin) and separates the double-stranded (ds)DNA. Forms a right-handed helical filament on oriC DNA; dsDNA binds to the exterior of the filament while single-stranded (ss)DNA is stabiized in the filament's interior. The ATP-DnaA-oriC complex binds and stabilizes one strand of the AT-rich DNA unwinding element (DUE), permitting loading of DNA polymerase. After initiation quickly degrades to an ADP-DnaA complex that is not apt for DNA replication. Binds acidic phospholipids. The polypeptide is Chromosomal replication initiator protein DnaA (Halorhodospira halophila (strain DSM 244 / SL1) (Ectothiorhodospira halophila (strain DSM 244 / SL1))).